We begin with the raw amino-acid sequence, 85 residues long: RNA-binding protein Hfq (85 aa).

In terms of domain architecture, Sm spans 9–68 (DPFLNALRRERIPVSIYLVNGIKLQGQVESFDQFVILLKNTVSQMVYKHAISTVVPARPV).

It belongs to the Hfq family. As to quaternary structure, homohexamer.

In terms of biological role, RNA chaperone that binds small regulatory RNA (sRNAs) and mRNAs to facilitate mRNA translational regulation in response to envelope stress, environmental stress and changes in metabolite concentrations. Also binds with high specificity to tRNAs. This chain is RNA-binding protein Hfq, found in Tolumonas auensis (strain DSM 9187 / NBRC 110442 / TA 4).